A 257-amino-acid polypeptide reads, in one-letter code: Aspartate/glutamate leucyltransferase (257 aa).

Belongs to the R-transferase family. Bpt subfamily.

The protein resides in the cytoplasm. The catalysed reaction is N-terminal L-glutamyl-[protein] + L-leucyl-tRNA(Leu) = N-terminal L-leucyl-L-glutamyl-[protein] + tRNA(Leu) + H(+). It catalyses the reaction N-terminal L-aspartyl-[protein] + L-leucyl-tRNA(Leu) = N-terminal L-leucyl-L-aspartyl-[protein] + tRNA(Leu) + H(+). In terms of biological role, functions in the N-end rule pathway of protein degradation where it conjugates Leu from its aminoacyl-tRNA to the N-termini of proteins containing an N-terminal aspartate or glutamate. The sequence is that of Aspartate/glutamate leucyltransferase from Leptospira interrogans serogroup Icterohaemorrhagiae serovar copenhageni (strain Fiocruz L1-130).